A 252-amino-acid chain; its full sequence is MNKVVVKNVTFGEGAPKICVPMVGKTVAALKEEAEMLKTIDLDVVEWRVDFYEDVKDLAKVETALDEIRVVLPETPILFTFRSAKEGGELAVSDEFYFELNETLARTGKIDLVDVELFNEEADVLRLIETAHKHDVKVVMSNHDFDKTPAKEEIVSRLTRMEALGADLPKIAVMPKSATDVLTLLDATNTVSEKADQPIITMSMAGTGVISRLAGEVFGSAMTFGAAKKASAPGQIDVNELRHVLDLLHKQF.

3-dehydroquinate-binding positions include 46–48 and Arg-82; that span reads EWR. The active-site Proton donor/acceptor is His-143. Catalysis depends on Lys-170, which acts as the Schiff-base intermediate with substrate. 3-dehydroquinate-binding residues include Arg-212, Ser-231, and Gln-235.

The protein belongs to the type-I 3-dehydroquinase family. Homodimer.

It catalyses the reaction 3-dehydroquinate = 3-dehydroshikimate + H2O. Its pathway is metabolic intermediate biosynthesis; chorismate biosynthesis; chorismate from D-erythrose 4-phosphate and phosphoenolpyruvate: step 3/7. In terms of biological role, involved in the third step of the chorismate pathway, which leads to the biosynthesis of aromatic amino acids. Catalyzes the cis-dehydration of 3-dehydroquinate (DHQ) and introduces the first double bond of the aromatic ring to yield 3-dehydroshikimate. In Listeria welshimeri serovar 6b (strain ATCC 35897 / DSM 20650 / CCUG 15529 / CIP 8149 / NCTC 11857 / SLCC 5334 / V8), this protein is 3-dehydroquinate dehydratase.